A 237-amino-acid chain; its full sequence is Ribonuclease PH (237 aa).

Phosphate is bound by residues Arg86 and 124–126; that span reads GTR.

It belongs to the RNase PH family. In terms of assembly, homohexameric ring arranged as a trimer of dimers.

It carries out the reaction tRNA(n+1) + phosphate = tRNA(n) + a ribonucleoside 5'-diphosphate. Phosphorolytic 3'-5' exoribonuclease that plays an important role in tRNA 3'-end maturation. Removes nucleotide residues following the 3'-CCA terminus of tRNAs; can also add nucleotides to the ends of RNA molecules by using nucleoside diphosphates as substrates, but this may not be physiologically important. Probably plays a role in initiation of 16S rRNA degradation (leading to ribosome degradation) during starvation. The protein is Ribonuclease PH of Alteromonas mediterranea (strain DSM 17117 / CIP 110805 / LMG 28347 / Deep ecotype).